The chain runs to 121 residues: Large ribosomal subunit protein uL18 (121 aa).

Belongs to the universal ribosomal protein uL18 family. In terms of assembly, part of the 50S ribosomal subunit; part of the 5S rRNA/L5/L18/L25 subcomplex. Contacts the 5S and 23S rRNAs.

This is one of the proteins that bind and probably mediate the attachment of the 5S RNA into the large ribosomal subunit, where it forms part of the central protuberance. The sequence is that of Large ribosomal subunit protein uL18 from Ehrlichia canis (strain Jake).